The sequence spans 270 residues: Formamidopyrimidine-DNA glycosylase (270 aa).

The active-site Schiff-base intermediate with DNA is the Pro2. The Proton donor role is filled by Glu3. Catalysis depends on Lys58, which acts as the Proton donor; for beta-elimination activity. DNA is bound by residues His91, Arg110, and Lys151. The FPG-type zinc-finger motif lies at 236-270 (FAYGRGGQPCKVCGTTLREIKLGQRASVYCPKCQR). The Proton donor; for delta-elimination activity role is filled by Arg260.

It belongs to the FPG family. As to quaternary structure, monomer. Zn(2+) is required as a cofactor.

The catalysed reaction is Hydrolysis of DNA containing ring-opened 7-methylguanine residues, releasing 2,6-diamino-4-hydroxy-5-(N-methyl)formamidopyrimidine.. It carries out the reaction 2'-deoxyribonucleotide-(2'-deoxyribose 5'-phosphate)-2'-deoxyribonucleotide-DNA = a 3'-end 2'-deoxyribonucleotide-(2,3-dehydro-2,3-deoxyribose 5'-phosphate)-DNA + a 5'-end 5'-phospho-2'-deoxyribonucleoside-DNA + H(+). Involved in base excision repair of DNA damaged by oxidation or by mutagenic agents. Acts as a DNA glycosylase that recognizes and removes damaged bases. Has a preference for oxidized purines, such as 7,8-dihydro-8-oxoguanine (8-oxoG). Has AP (apurinic/apyrimidinic) lyase activity and introduces nicks in the DNA strand. Cleaves the DNA backbone by beta-delta elimination to generate a single-strand break at the site of the removed base with both 3'- and 5'-phosphates. The chain is Formamidopyrimidine-DNA glycosylase from Pseudomonas syringae pv. tomato (strain ATCC BAA-871 / DC3000).